Here is a 139-residue protein sequence, read N- to C-terminus: MLKEFQEFISKGNVMDLAVGVIIGAAFGKIVDSLVNDIIMPIIGAIFGGLDFNNYFVGLSSAVNATSLADARKQGAVLAYGSFITVALNFVILAFIIFLMVKAVNNLRKRLEREKPAAAAPPPADIALLTQIRDLLARK.

Helical transmembrane passes span phenylalanine 8–glycine 28, isoleucine 30–leucine 50, and glycine 81–valine 101.

This sequence belongs to the MscL family. Homopentamer.

It is found in the cell inner membrane. Functionally, channel that opens in response to stretch forces in the membrane lipid bilayer. May participate in the regulation of osmotic pressure changes within the cell. In Mesorhizobium japonicum (strain LMG 29417 / CECT 9101 / MAFF 303099) (Mesorhizobium loti (strain MAFF 303099)), this protein is Large-conductance mechanosensitive channel 1.